A 284-amino-acid polypeptide reads, in one-letter code: NAD/NADP-dependent indole-3-acetaldehyde reductase (284 aa).

Residue Asp-49 coordinates NADPH. Catalysis depends on proton donor residues Tyr-54 and His-109. 10 residues coordinate NADPH: Ser-143, Gln-165, Leu-196, Arg-201, Thr-239, Thr-240, Thr-241, Ser-242, Lys-243, and Arg-246.

It belongs to the aldo/keto reductase family. As to quaternary structure, monomer.

It localises to the cytoplasm. The protein resides in the nucleus. The catalysed reaction is indole-3-ethanol + NAD(+) = indole-3-acetaldehyde + NADH + H(+). The enzyme catalyses indole-3-ethanol + NADP(+) = indole-3-acetaldehyde + NADPH + H(+). The protein is NAD/NADP-dependent indole-3-acetaldehyde reductase of Schizosaccharomyces pombe (strain 972 / ATCC 24843) (Fission yeast).